The sequence spans 702 residues: MKSMLEKINQLRDVLKHHEYLYHVNDAPEITDAEYDALLEKLREWESQYPELMNPDSPTQKVGASPSTAFKPVTHQVPMLSLDNVFDEKGFLAFNKRVSERLEAESSAQKASLNPLVRDSDQKNRSEKNVQEALTFCCELKLDGLAVSLIYEKGELTQAATRGNGFQGENITHNIRTIQSIPLRLKGKALPQRIEIRGEVYMPQAGFEKLNKQARANHEKIFSNPRNAAAGSLRQLDPHITAQRPLNFFCYGVGLLEGGVLPQSHIQRLMQLKAWGLPVHDRITLCTGAEQVMAFYQEIAQARATLGFDIDGIVIKVDDVLLQEKLGFLAKAPRWATAFKFPAQEKTTQVLGVEFQVGRTGALTPVARLEPVELGGALVSNANLHNADEIARLGLRIGDTVVVRRAGDVIPQIVNVIIESRPQNTVEIIFPHHCPICKSVAKRIEGEAVIRCTGGLFCPAQRKEALKHFVARRALDIEGLGDKIIHQLVDKKYVQNPADLFHLTSEKLLSLKRMREKSAQNLLNSLKKSQKTTFARFLYALGIREVGETTAANLALYFGQLDLLRKADIETLKKVPDVGEVVAKNLVDFFGNEHHQQVISALESVLDWPDPEPIEKPNHPFRDKTVVLTGSLNAFTRDDLKAHLISLGAKVSGSVSKKTDFLIAGENPGSKAQKAEKSGIKIMNEPELIEFLKALKPEGTKV.

NAD(+) contacts are provided by residues 32–36 (DAEYD) and 81–82 (SL). The tract at residues 104–125 (AESSAQKASLNPLVRDSDQKNR) is disordered. Glutamate 139 is a binding site for NAD(+). Catalysis depends on lysine 141, which acts as the N6-AMP-lysine intermediate. The NAD(+) site is built by arginine 162, glutamate 199, lysine 316, and lysine 340. 4 residues coordinate Zn(2+): cysteine 434, cysteine 437, cysteine 452, and cysteine 458. In terms of domain architecture, BRCT spans 616-702 (KPNHPFRDKT…KALKPEGTKV (87 aa)).

Belongs to the NAD-dependent DNA ligase family. LigA subfamily. The cofactor is Mg(2+). Mn(2+) serves as cofactor.

It carries out the reaction NAD(+) + (deoxyribonucleotide)n-3'-hydroxyl + 5'-phospho-(deoxyribonucleotide)m = (deoxyribonucleotide)n+m + AMP + beta-nicotinamide D-nucleotide.. Functionally, DNA ligase that catalyzes the formation of phosphodiester linkages between 5'-phosphoryl and 3'-hydroxyl groups in double-stranded DNA using NAD as a coenzyme and as the energy source for the reaction. It is essential for DNA replication and repair of damaged DNA. This is DNA ligase from Hamiltonella defensa subsp. Acyrthosiphon pisum (strain 5AT).